The sequence spans 240 residues: Pyridoxine 5'-phosphate synthase (240 aa).

Position 7 (N7) interacts with 3-amino-2-oxopropyl phosphate. D9–H10 provides a ligand contact to 1-deoxy-D-xylulose 5-phosphate. Position 18 (R18) interacts with 3-amino-2-oxopropyl phosphate. H43 functions as the Proton acceptor in the catalytic mechanism. Residues R45 and H50 each coordinate 1-deoxy-D-xylulose 5-phosphate. E70 acts as the Proton acceptor in catalysis. 1-deoxy-D-xylulose 5-phosphate is bound at residue T100. H191 (proton donor) is an active-site residue. 3-amino-2-oxopropyl phosphate contacts are provided by residues G192 and G213–H214.

It belongs to the PNP synthase family. In terms of assembly, homooctamer; tetramer of dimers.

It localises to the cytoplasm. It catalyses the reaction 3-amino-2-oxopropyl phosphate + 1-deoxy-D-xylulose 5-phosphate = pyridoxine 5'-phosphate + phosphate + 2 H2O + H(+). It participates in cofactor biosynthesis; pyridoxine 5'-phosphate biosynthesis; pyridoxine 5'-phosphate from D-erythrose 4-phosphate: step 5/5. Catalyzes the complicated ring closure reaction between the two acyclic compounds 1-deoxy-D-xylulose-5-phosphate (DXP) and 3-amino-2-oxopropyl phosphate (1-amino-acetone-3-phosphate or AAP) to form pyridoxine 5'-phosphate (PNP) and inorganic phosphate. The sequence is that of Pyridoxine 5'-phosphate synthase from Acaryochloris marina (strain MBIC 11017).